The chain runs to 167 residues: NAD(P)H-quinone oxidoreductase subunit I, chloroplastic (167 aa).

4Fe-4S ferredoxin-type domains follow at residues Gly-55–Lys-84 and Leu-95–Glu-124. Cys-64, Cys-67, Cys-70, Cys-74, Cys-104, Cys-107, Cys-110, and Cys-114 together coordinate [4Fe-4S] cluster.

This sequence belongs to the complex I 23 kDa subunit family. As to quaternary structure, NDH is composed of at least 16 different subunits, 5 of which are encoded in the nucleus. It depends on [4Fe-4S] cluster as a cofactor.

Its subcellular location is the plastid. The protein resides in the chloroplast thylakoid membrane. It carries out the reaction a plastoquinone + NADH + (n+1) H(+)(in) = a plastoquinol + NAD(+) + n H(+)(out). It catalyses the reaction a plastoquinone + NADPH + (n+1) H(+)(in) = a plastoquinol + NADP(+) + n H(+)(out). Functionally, NDH shuttles electrons from NAD(P)H:plastoquinone, via FMN and iron-sulfur (Fe-S) centers, to quinones in the photosynthetic chain and possibly in a chloroplast respiratory chain. The immediate electron acceptor for the enzyme in this species is believed to be plastoquinone. Couples the redox reaction to proton translocation, and thus conserves the redox energy in a proton gradient. The polypeptide is NAD(P)H-quinone oxidoreductase subunit I, chloroplastic (Solanum tuberosum (Potato)).